Reading from the N-terminus, the 233-residue chain is Preflagellin peptidase (233 aa).

Residue Met1 is a topological domain, cytoplasmic. Residues 2-18 (IAYAIGLLGLLIASIQD) form a helical membrane-spanning segment. Residues 19 to 23 (IKSRE) are Extracellular-facing. A helical membrane pass occupies residues 24 to 46 (IENYIWIGMAVIGLLLSTYLSFT). Topologically, residues 47–49 (TGN) are cytoplasmic. A helical transmembrane segment spans residues 50-72 (FMPIISSISGFIICFIIGYLMFV). At 73-78 (LGIGGA) the chain is on the extracellular side. A helical transmembrane segment spans residues 79–89 (DGKILMGMGAL). Over 90–110 (IPSYAFPVYSSLQPLYTMEYI) the chain is Cytoplasmic. The chain crosses the membrane as a helical span at residues 111 to 139 (PWFPLLVFFNGVILMIVLPIYLFFKNLSN). Over 140 to 207 (GVKPKKLKEY…QYVWATPELP (68 aa)) the chain is Extracellular. A helical membrane pass occupies residues 208–219 (LLVPIALSYIIT). At 220 to 233 (PFLGDKILSIILPM) the chain is on the cytoplasmic side.

The protein belongs to the peptidase A24 family. Archaeal preflagellin peptidase subfamily.

Its subcellular location is the cell membrane. The catalysed reaction is Cleaves the signal peptide of 3 to 12 amino acids from the N-terminal of preflagellin, usually at Arg-Gly-|- or Lys-Gly-|-, to release flagellin.. In terms of biological role, cleaves the N-terminal leader peptide from preflagellins. The processing of preflagellins is necessary for assembly of flagellins into a flagellum structure. The protein is Preflagellin peptidase (flaK) of Methanococcus voltae.